The sequence spans 1593 residues: Autotransporter CRAC (1593 aa).

The N-terminal stretch at M1–A54 is a signal peptide. The segment covering G65–N85 has biased composition (polar residues). Disordered regions lie at residues G65–S100 and K1267–P1286. Over residues S86–S97 the composition is skewed to low complexity. The segment covering D1269–T1280 has biased composition (polar residues). The 269-residue stretch at N1325 to F1593 folds into the Autotransporter domain.

Post-translationally, glycosylated by heptosyltransferas BAHTCr. Glycosylation is required for adhesion to mammalian cells and colonization of the mouse host gastrointestinal tract.

It localises to the cell outer membrane. Autotransporter required for the colonization of the mouse host gastrointestinal tract, possibly by mediating bacteria adhesion to host cells. The polypeptide is Autotransporter CRAC (Citrobacter rodentium (strain ICC168) (Citrobacter freundii biotype 4280)).